The chain runs to 265 residues: Glutamate racemase (265 aa).

Substrate is bound by residues 10-11 (DS) and 42-43 (YG). C73 (proton donor/acceptor) is an active-site residue. 74–75 (NT) serves as a coordination point for substrate. C180 functions as the Proton donor/acceptor in the catalytic mechanism. 181–182 (TH) lines the substrate pocket.

Belongs to the aspartate/glutamate racemases family.

The enzyme catalyses L-glutamate = D-glutamate. Its pathway is cell wall biogenesis; peptidoglycan biosynthesis. Provides the (R)-glutamate required for cell wall biosynthesis. This chain is Glutamate racemase, found in Synechococcus sp. (strain CC9605).